A 214-amino-acid chain; its full sequence is Type IV major pilin protein PilE1 (214 aa).

A propeptide spans Met-1 to Gly-7 (leader sequence). Phe-8 carries the post-translational modification N-methylphenylalanine. A helical transmembrane segment spans residues Phe-8–Leu-28. A disulfide bond links Cys-127 and Cys-161. A disordered region spans residues Ala-182–Glu-214. The segment covering Thr-192–Glu-214 has biased composition (basic and acidic residues).

Belongs to the N-Me-Phe pilin family. In terms of assembly, the pili are polar flexible filaments of about 5.4 nanometers diameter and 2.5 micrometers average length; they consist of only a single polypeptide chain arranged in a helical configuration of five subunits per turn in the assembled pilus.

The protein localises to the fimbrium. It is found in the membrane. Its function is as follows. Major component of the type IV pilus (T4P) that plays a role in cellular adherence, microcolony formation, resistance to neutrophil mediated killing, twitching motility as well as transformation. Mediates the attachment and the formation of bacterial microcolonies on host epithelial cells. Mechanistically, pili retractation induces host NF-kappa-B activation in infected cells, which is temporally associated with the formation of gonococcal microcolonies. This is Type IV major pilin protein PilE1 (pilE1) from Neisseria gonorrhoeae.